The chain runs to 509 residues: Zinc finger CCCH-type with G patch domain-containing protein (509 aa).

The C3H1-type zinc finger occupies 155–178 (PCNYYLEGECRFDEIRCRYSHGAL). The interval 253–277 (EEDGLTSEDSSSSPHDESSDEIDSD) is disordered. The 47-residue stretch at 310-356 (TRGIGSKLMEKMGYIHGTGLGSEGRGIVTPVSAQILPQGRSLDACME) folds into the G-patch domain. The interval 409–430 (GGESRHQGDQAAKKAKTNDLQQ) is disordered. Residues 411–420 (ESRHQGDQAA) show a composition bias toward basic and acidic residues.

The protein localises to the nucleus. Functionally, transcription repressor. The polypeptide is Zinc finger CCCH-type with G patch domain-containing protein (Drosophila persimilis (Fruit fly)).